The chain runs to 414 residues: Multifunctional CCA protein (414 aa).

Residues Gly-8 and Arg-11 each coordinate ATP. CTP is bound by residues Gly-8 and Arg-11. Residues Glu-21 and Asp-23 each contribute to the Mg(2+) site. Residues Arg-91, Arg-137, and Arg-140 each coordinate ATP. 3 residues coordinate CTP: Arg-91, Arg-137, and Arg-140. An HD domain is found at 228–329; it reads TGIHTLMTLA…LKLFDAIDVW (102 aa).

It belongs to the tRNA nucleotidyltransferase/poly(A) polymerase family. Bacterial CCA-adding enzyme type 1 subfamily. In terms of assembly, monomer. Can also form homodimers and oligomers. The cofactor is Mg(2+). It depends on Ni(2+) as a cofactor.

The enzyme catalyses a tRNA precursor + 2 CTP + ATP = a tRNA with a 3' CCA end + 3 diphosphate. It catalyses the reaction a tRNA with a 3' CCA end + 2 CTP + ATP = a tRNA with a 3' CCACCA end + 3 diphosphate. Catalyzes the addition and repair of the essential 3'-terminal CCA sequence in tRNAs without using a nucleic acid template. Adds these three nucleotides in the order of C, C, and A to the tRNA nucleotide-73, using CTP and ATP as substrates and producing inorganic pyrophosphate. tRNA 3'-terminal CCA addition is required both for tRNA processing and repair. Also involved in tRNA surveillance by mediating tandem CCA addition to generate a CCACCA at the 3' terminus of unstable tRNAs. While stable tRNAs receive only 3'-terminal CCA, unstable tRNAs are marked with CCACCA and rapidly degraded. This Yersinia enterocolitica serotype O:8 / biotype 1B (strain NCTC 13174 / 8081) protein is Multifunctional CCA protein.